The sequence spans 111 residues: Large ribosomal subunit protein uL23 (111 aa).

This sequence belongs to the universal ribosomal protein uL23 family. In terms of assembly, part of the 50S ribosomal subunit. Contacts protein L29, and trigger factor when it is bound to the ribosome.

One of the early assembly proteins it binds 23S rRNA. One of the proteins that surrounds the polypeptide exit tunnel on the outside of the ribosome. Forms the main docking site for trigger factor binding to the ribosome. This is Large ribosomal subunit protein uL23 from Chlamydia muridarum (strain MoPn / Nigg).